A 444-amino-acid polypeptide reads, in one-letter code: MARKYFGTDGVRGKVGEFPITPDFVMKLGWAAGKVLSKKGTKKVLIGKDTRISGYMLESALEAGLSAAGLKAILMGPMPTPAVAYLTRTFRAEAGIVISASHNPFYDNGIKFFSADGTKLPDDVEMAIEAELDHEIKCVESADLGKAVRIEDAAGRYIEFCKSTFPSNLSLEGLKMVVDCGNGATYHIAPSVFRELGAEVIAIGCSPDGLNINDGVGSTAPDALAAKVLECKADLGVAFDGDGDRLVMVDHTGYIIDGDEILYIIARDALRNGRLKGGVVGTLMANMGLELALQTLGIPFARAKVGDRYVLEMMNEKGWRIGGENSGHIICLDQTTTGDGIVAALQVLMAICTAEMPLAKLRSGMSKFPQVLVNVRFAEGKDPLAADAVNQEVAKVEQELAGRGRVLLRKSGTEPLIRVMVEGEHEQQVRDMAQRIAQQVESAF.

Serine 101 acts as the Phosphoserine intermediate in catalysis. The Mg(2+) site is built by serine 101, aspartate 240, aspartate 242, and aspartate 244. Serine 101 is subject to Phosphoserine.

It belongs to the phosphohexose mutase family. Mg(2+) is required as a cofactor. Activated by phosphorylation.

It catalyses the reaction alpha-D-glucosamine 1-phosphate = D-glucosamine 6-phosphate. Functionally, catalyzes the conversion of glucosamine-6-phosphate to glucosamine-1-phosphate. The protein is Phosphoglucosamine mutase of Aeromonas salmonicida (strain A449).